The following is a 734-amino-acid chain: Photosystem I P700 chlorophyll a apoprotein A2 (734 aa).

Helical transmembrane passes span 46–69, 135–158, 175–199, 273–291, 330–353, 369–395, 417–439, and 517–535; these read IFASHFGHLAIIFLWTSGNLFHVA, LYFGALGLLVLSTTLLFAGWLHLQ, LNHHLSGLFGVSSLAWSGHLIHVAI, IAHHHLAIAVVFIFAGHMY, LHMQLGLALASLGVATSLVAQHMY, AALYTHHQYIAGFLMVGAFAHGAIFFV, AIISHLSWVSLFLGFHTLGLYIH, and FLVHHAIALGLHTTTLILV. [4Fe-4S] cluster contacts are provided by C559 and C568. The next 2 membrane-spanning stretches (helical) occupy residues 575–596 and 643–665; these read AFYLAMFWMLNTISWVTFYWHW and QAVWAWMFLFGHLIWATGFMFLI. 3 residues coordinate chlorophyll a: H654, M662, and Y670. W671 lines the phylloquinone pocket. A helical transmembrane segment spans residues 707 to 727; the sequence is LVGLAHFTVGFIFTFAPFVIA.

Belongs to the PsaA/PsaB family. The PsaA/B heterodimer binds the P700 chlorophyll special pair and subsequent electron acceptors. PSI consists of a core antenna complex that captures photons, and an electron transfer chain that converts photonic excitation into a charge separation. The eukaryotic PSI reaction center is composed of at least 11 subunits. P700 is a chlorophyll a/chlorophyll a' dimer, A0 is one or more chlorophyll a, A1 is one or both phylloquinones and FX is a shared 4Fe-4S iron-sulfur center. serves as cofactor.

The protein localises to the plastid. Its subcellular location is the chloroplast thylakoid membrane. The enzyme catalyses reduced [plastocyanin] + hnu + oxidized [2Fe-2S]-[ferredoxin] = oxidized [plastocyanin] + reduced [2Fe-2S]-[ferredoxin]. Its function is as follows. PsaA and PsaB bind P700, the primary electron donor of photosystem I (PSI), as well as the electron acceptors A0, A1 and FX. PSI is a plastocyanin/cytochrome c6-ferredoxin oxidoreductase, converting photonic excitation into a charge separation, which transfers an electron from the donor P700 chlorophyll pair to the spectroscopically characterized acceptors A0, A1, FX, FA and FB in turn. Oxidized P700 is reduced on the lumenal side of the thylakoid membrane by plastocyanin or cytochrome c6. The sequence is that of Photosystem I P700 chlorophyll a apoprotein A2 from Emiliania huxleyi (Coccolithophore).